We begin with the raw amino-acid sequence, 388 residues long: Transcription factor SOX-7 (388 aa).

Disordered stretches follow at residues 20–46 and 140–197; these read DAELSDGQSPPAVPRPPGDKGSESRIR and RDQN…VDTY. 2 stretches are compositionally biased toward basic and acidic residues: residues 36 to 45 and 146 to 164; these read PGDKGSESRI and PEKRSGSRGALGEKEDRGE. Positions 45-113 form a DNA-binding region, HMG box; sequence IRRPMNAFMV…QHMQDYPNYK (69 aa). Residues 268–388 enclose the Sox C-terminal domain; the sequence is VSMMSPVPGC…ATYYNSYSVS (121 aa).

As to quaternary structure, interacts with CTNNB1/beta-catenin; this interaction may lead to the proteasomal degradation of active CTNNB1 and thus inhibition of Wnt/beta-catenin-stimulated transcription. As to expression, widely expressed in adult and fetal tissues. Present both in mesenchymal and epithelial cells in some adult tissues, including colon. Tends to be down-regulated in prostate adenocarcinomas and colorectal tumors due to promoter hypermethylation.

Its subcellular location is the nucleus. The protein resides in the cytoplasm. Its function is as follows. Binds to and activates the CDH5 promoter, hence plays a role in the transcriptional regulation of genes expressed in the hemogenic endothelium and blocks further differentiation into blood precursors. May be required for the survival of both hematopoietic and endothelial precursors during specification. Competes with GATA4 for binding and activation of the FGF3 promoter. Represses Wnt/beta-catenin-stimulated transcription, probably by targeting CTNNB1 to proteasomal degradation. Binds the DNA sequence 5'-AACAAT-3'. This is Transcription factor SOX-7 (SOX7) from Homo sapiens (Human).